Consider the following 117-residue polypeptide: Large ribosomal subunit protein uL18 (117 aa).

The protein belongs to the universal ribosomal protein uL18 family. Part of the 50S ribosomal subunit; part of the 5S rRNA/L5/L18/L25 subcomplex. Contacts the 5S and 23S rRNAs.

This is one of the proteins that bind and probably mediate the attachment of the 5S RNA into the large ribosomal subunit, where it forms part of the central protuberance. The chain is Large ribosomal subunit protein uL18 from Methylobacillus flagellatus (strain ATCC 51484 / DSM 6875 / VKM B-1610 / KT).